The sequence spans 556 residues: M-phase inducer phosphatase (556 aa).

Disordered regions lie at residues Ser-165–Arg-186 and Thr-257–Lys-297. Positions Lys-287–Lys-297 are enriched in basic residues. Residues Met-371–Tyr-474 enclose the Rhodanese domain. The active site involves Cys-421. The span at Arg-505 to Pro-516 shows a compositional bias: polar residues. The interval Arg-505–Tyr-556 is disordered.

The protein belongs to the MPI phosphatase family.

It carries out the reaction O-phospho-L-tyrosyl-[protein] + H2O = L-tyrosyl-[protein] + phosphate. Functionally, this protein functions as a dosage-dependent inducer in mitotic control. It is a tyrosine protein phosphatase required for progression of the cell cycle. It may directly dephosphorylate p34(cdc2) and activate the p34(cdc2) kinase activity. This chain is M-phase inducer phosphatase (nimT), found in Emericella nidulans (strain FGSC A4 / ATCC 38163 / CBS 112.46 / NRRL 194 / M139) (Aspergillus nidulans).